A 141-amino-acid polypeptide reads, in one-letter code: 6,7-dimethyl-8-ribityllumazine synthase (141 aa).

Residues phenylalanine 13, 45–47, and 69–71 each bind 5-amino-6-(D-ribitylamino)uracil; these read SFE and AII. 74-75 provides a ligand contact to (2S)-2-hydroxy-3-oxobutyl phosphate; that stretch reads DT. Histidine 77 (proton donor) is an active-site residue. Residue leucine 102 participates in 5-amino-6-(D-ribitylamino)uracil binding. (2S)-2-hydroxy-3-oxobutyl phosphate is bound at residue arginine 117.

It belongs to the DMRL synthase family.

The catalysed reaction is (2S)-2-hydroxy-3-oxobutyl phosphate + 5-amino-6-(D-ribitylamino)uracil = 6,7-dimethyl-8-(1-D-ribityl)lumazine + phosphate + 2 H2O + H(+). It participates in cofactor biosynthesis; riboflavin biosynthesis; riboflavin from 2-hydroxy-3-oxobutyl phosphate and 5-amino-6-(D-ribitylamino)uracil: step 1/2. Catalyzes the formation of 6,7-dimethyl-8-ribityllumazine by condensation of 5-amino-6-(D-ribitylamino)uracil with 3,4-dihydroxy-2-butanone 4-phosphate. This is the penultimate step in the biosynthesis of riboflavin. This chain is 6,7-dimethyl-8-ribityllumazine synthase, found in Methanopyrus kandleri (strain AV19 / DSM 6324 / JCM 9639 / NBRC 100938).